A 139-amino-acid chain; its full sequence is Small ribosomal subunit protein uS11 (139 aa).

The span at 1-13 (MAKQAAKGSAAAT) shows a compositional bias: low complexity. Residues 1-30 (MAKQAAKGSAAATKRQRGKRREKKNVPRGQ) form a disordered region. A compositionally biased stretch (basic residues) spans 14–23 (KRQRGKRREK).

It belongs to the universal ribosomal protein uS11 family. Part of the 30S ribosomal subunit. Interacts with proteins S7 and S18. Binds to IF-3.

Its function is as follows. Located on the platform of the 30S subunit, it bridges several disparate RNA helices of the 16S rRNA. Forms part of the Shine-Dalgarno cleft in the 70S ribosome. This is Small ribosomal subunit protein uS11 from Roseiflexus sp. (strain RS-1).